Here is a 1342-residue protein sequence, read N- to C-terminus: DNA-directed RNA polymerase subunit beta (1342 aa).

The protein belongs to the RNA polymerase beta chain family. In terms of assembly, the RNAP catalytic core consists of 2 alpha, 1 beta, 1 beta' and 1 omega subunit. When a sigma factor is associated with the core the holoenzyme is formed, which can initiate transcription.

It catalyses the reaction RNA(n) + a ribonucleoside 5'-triphosphate = RNA(n+1) + diphosphate. In terms of biological role, DNA-dependent RNA polymerase catalyzes the transcription of DNA into RNA using the four ribonucleoside triphosphates as substrates. This is DNA-directed RNA polymerase subunit beta from Blochmanniella floridana.